The primary structure comprises 99 residues: HssA/B-like protein 41 (99 aa).

A disordered region spans residues 1–29 (MTLFSSISSISNPMTSSKSSISSFGSGTS).

The protein belongs to the hssA/B family.

In Dictyostelium discoideum (Social amoeba), this protein is HssA/B-like protein 41 (hssl41).